Here is a 1010-residue protein sequence, read N- to C-terminus: Polyhomeotic-like protein 1 (1010 aa).

Over residues 1-22 (METESEQNSSSTNGSSSSGASS) the composition is skewed to low complexity. 6 disordered regions span residues 1-25 (METE…SRPQ), 212-243 (NQQA…LSQT), 259-312 (GQSL…TGVV), 444-506 (QQQG…SKPP), 565-588 (GAVQ…PGAL), and 646-678 (KRKA…SPKV). Residues 212-228 (NQQASAQGPQMPGSTQK) are compositionally biased toward polar residues. Residues 279 to 292 (MGPGGGGQAPGGLG) show a composition bias toward gly residues. Positions 453 to 463 (PQPPQVPPTQQ) are enriched in pro residues. Low complexity predominate over residues 464 to 480 (VPPSQSQQQAQTLVVQP). A compositionally biased stretch (pro residues) spans 488-500 (TLPPEPTSKPPIP). Low complexity predominate over residues 575–587 (ASSPPSSQAAPGA). Ser-651 is subject to Phosphoserine. Lys-769 is covalently cross-linked (Glycyl lysine isopeptide (Lys-Gly) (interchain with G-Cter in SUMO2)). Residues 772-794 (QAGLPTGLNESQPSGPLGGDSPS) are disordered. The segment at 797-831 (LEKKANLLKCEYCGKYAPAEQFRGSKRFCSMTCAK) adopts an FCS-type zinc-finger fold. Positions 806, 809, 825, and 829 each coordinate Zn(2+). The tract at residues 854–928 (ASYARVRRRG…LGNTITTPST (75 aa)) is disordered. A Phosphoserine modification is found at Ser-904. At Thr-928 the chain carries Phosphothreonine. In terms of domain architecture, SAM spans 946–1010 (WSVEEVYEFI…CAKINVLKET (65 aa)).

Homodimer. Component of a PRC1-like complex. Interacts with the SAM domain of SCMH1 via its SAM domain in vitro. Interacts with RNF2 and CBX7. Interacts with PHC2. Interacts with BMI1. As to expression, highly expressed in testis with lower levels in most other tissues. Expressed in embryonic stem cells.

The protein localises to the nucleus. Its function is as follows. Component of a Polycomb group (PcG) multiprotein PRC1-like complex, a complex class required to maintain the transcriptionally repressive state of many genes, including Hox genes, throughout development. PcG PRC1 complex acts via chromatin remodeling and modification of histones; it mediates monoubiquitination of histone H2A 'Lys-119', rendering chromatin heritably changed in its expressibility. Required for proper control of cellular levels of GMNN expression. The polypeptide is Polyhomeotic-like protein 1 (Mus musculus (Mouse)).